The chain runs to 875 residues: Alanine--tRNA ligase (875 aa).

Zn(2+) contacts are provided by H564, H568, C666, and H670.

It belongs to the class-II aminoacyl-tRNA synthetase family. Homotetramer. Requires Zn(2+) as cofactor.

It localises to the cytoplasm. The catalysed reaction is tRNA(Ala) + L-alanine + ATP = L-alanyl-tRNA(Ala) + AMP + diphosphate. Functionally, catalyzes the attachment of alanine to tRNA(Ala) in a two-step reaction: alanine is first activated by ATP to form Ala-AMP and then transferred to the acceptor end of tRNA(Ala). Also edits incorrectly charged Ser-tRNA(Ala) and Gly-tRNA(Ala) via its editing domain. The sequence is that of Alanine--tRNA ligase from Yersinia pestis bv. Antiqua (strain Angola).